Here is a 176-residue protein sequence, read N- to C-terminus: uncharacterized protein (176 aa).

Polar residues predominate over residues 1 to 12 (MRLPYSSSKPIP). Disordered regions lie at residues 1-88 (MRLP…PQQQ) and 109-132 (VNNS…PSSS). A compositionally biased stretch (low complexity) spans 13–24 (TNNNNNNNNTNN). The span at 37 to 46 (SYYQTQENNK) shows a compositional bias: polar residues. A compositionally biased stretch (low complexity) spans 47-88 (PQQSQQHPLLQHQQQQQQQQQQQQQQQQQQQQQQQQQQPQQQ).

This is an uncharacterized protein from Dictyostelium discoideum (Social amoeba).